Reading from the N-terminus, the 245-residue chain is Folate receptor gamma (245 aa).

The N-terminal stretch at 1–22 (MDMAWQMMQLLLLALVTAAGSA) is a signal peptide. 8 disulfides stabilise this stretch: C37-C65, C57-C105, C66-C109, C89-C175, C96-C146, C135-C209, C139-C189, and C152-C169. 2 residues coordinate folate: D103 and Y107. N121 is a glycosylation site (N-linked (GlcNAc...) asparagine). Folate is bound by residues 124–128 (WRKER), 157–162 (HKGWNW), and S196. Residue N161 is glycosylated (N-linked (GlcNAc...) asparagine). N-linked (GlcNAc...) asparagine glycosylation occurs at N201.

The protein belongs to the folate receptor family. As to expression, spleen, thymus, bone marrow, ovarian carcinoma, and uterine carcinoma.

Its subcellular location is the secreted. In terms of biological role, binds to folate and reduced folic acid derivatives and mediates delivery of 5-methyltetrahydrofolate to the interior of cells. Isoform Short does not bind folate. This chain is Folate receptor gamma (FOLR3), found in Homo sapiens (Human).